Consider the following 215-residue polypeptide: Ribose-5-phosphate isomerase A (215 aa).

Substrate is bound by residues T26 to T29, D79 to D82, and K92 to G95. Residue E101 is the Proton acceptor of the active site. K119 contacts substrate.

This sequence belongs to the ribose 5-phosphate isomerase family. As to quaternary structure, homodimer.

The catalysed reaction is aldehydo-D-ribose 5-phosphate = D-ribulose 5-phosphate. Its pathway is carbohydrate degradation; pentose phosphate pathway; D-ribose 5-phosphate from D-ribulose 5-phosphate (non-oxidative stage): step 1/1. Catalyzes the reversible conversion of ribose-5-phosphate to ribulose 5-phosphate. The chain is Ribose-5-phosphate isomerase A from Stenotrophomonas maltophilia (strain K279a).